Consider the following 621-residue polypeptide: Chaperone protein HtpG (621 aa).

Residues 1–328 are a; substrate-binding; it reads MKQEKKKFDA…SEDLPLNISR (328 aa). The segment at 329–544 is b; that stretch reads ESLQHNNVLE…EAAMDIRMER (216 aa). A disordered region spans residues 478 to 498; it reads DVDQATSSSEEKNKDDKKSDD. The segment covering 486–498 has biased composition (basic and acidic residues); that stretch reads SEEKNKDDKKSDD. The c stretch occupies residues 545-621; sequence FLIEQKQIAN…LNDIVQKAIL (77 aa).

The protein belongs to the heat shock protein 90 family. As to quaternary structure, homodimer.

It is found in the cytoplasm. Its function is as follows. Molecular chaperone. Has ATPase activity. The chain is Chaperone protein HtpG from Rickettsia bellii (strain RML369-C).